An 80-amino-acid polypeptide reads, in one-letter code: UPF0346 protein LSEI_1394 (80 aa).

This sequence belongs to the UPF0346 family.

This chain is UPF0346 protein LSEI_1394, found in Lacticaseibacillus paracasei (strain ATCC 334 / BCRC 17002 / CCUG 31169 / CIP 107868 / KCTC 3260 / NRRL B-441) (Lactobacillus paracasei).